Reading from the N-terminus, the 249-residue chain is Histone H1 (249 aa).

2 stretches are compositionally biased toward low complexity: residues 1 to 19 (MSDS…QTAS) and 27 to 43 (KKPA…TTAP). 2 disordered regions span residues 1–53 (MSDS…QQMV) and 105–249 (QTKG…ATKK). One can recognise an H15 domain in the interval 45 to 119 (THPPTQQMVD…GASGSFKLSA (75 aa)). Residues 121–134 (SKKEPKPKVSSVEK) show a composition bias toward basic and acidic residues. Basic residues predominate over residues 146–158 (AKKKTISATKKPK). The span at 173–190 (KSVDKKKAEKAKAKDAKK) shows a compositional bias: basic and acidic residues. Low complexity predominate over residues 195–233 (KAKPTTAKAKSSAAKPKTPKPKTTSAKPKKVVAAASPKK). Residues 234–249 (AAAKKPKAKTASATKK) are compositionally biased toward basic residues.

Belongs to the histone H1/H5 family.

The protein localises to the nucleus. It localises to the chromosome. Functionally, histones H1 are necessary for the condensation of nucleosome chains into higher-order structures. The chain is Histone H1 (His1) from Drosophila hydei (Fruit fly).